Consider the following 246-residue polypeptide: MNMLLLFLHEVINGERVTLTACSECVCPLQTSSSDDEYKCYCADTYSDCPGFCKKCKAEFGKYICLDLISPNDCVKPVSSSEAKQKMIKGERVTLTACSECVCPLRTSSSDEEYKCYCTDTYSDCPGFCKKCKAEFGKYICLDLISPNDCVKPVSSLEAKQNMIKEERVTLTACSECVCPLRTSSSDEEYKCYCTDTYSDCPGFCKTCKAEFGKYICLDLISPNDCVKPVSSWEARQKIKLLQGRE.

The N-terminal stretch at 1–19 is a signal peptide; sequence MNMLLLFLHEVINGERVTL. 5 cysteine pairs are disulfide-bonded: Cys22-Cys42, Cys25-Cys74, Cys27-Cys40, Cys49-Cys56, and Cys53-Cys65. Positions 31 to 35 are excised as a propeptide; it reads TSSSD. Propeptides lie at residues 77–95 and 107–111; these read PVSS…RVTL and TSSSD. 5 cysteine pairs are disulfide-bonded: Cys98–Cys118, Cys101–Cys150, Cys103–Cys116, Cys125–Cys132, and Cys129–Cys141. Propeptides lie at residues 153–171 and 183–187; these read PVSS…RVTL and TSSSD. 5 disulfide bridges follow: Cys174–Cys194, Cys177–Cys226, Cys179–Cys192, Cys201–Cys208, and Cys205–Cys217. The propeptide occupies 229–246; sequence PVSSWEARQKIKLLQGRE.

The protein belongs to the protease inhibitor I67 family. Each inhibitor is composed of two chains, designated A and B linked by three disulfide bonds.

In terms of biological role, weak inhibitor of cysteine proteinases. The polypeptide is Bromelain inhibitor (Ananas comosus (Pineapple)).